We begin with the raw amino-acid sequence, 210 residues long: 3-hexulose-6-phosphate synthase (210 aa).

The protein belongs to the HPS/KGPDC family. HPS subfamily.

The catalysed reaction is D-ribulose 5-phosphate + formaldehyde = D-arabino-hex-3-ulose 6-phosphate. The protein operates within one-carbon metabolism; formaldehyde assimilation via RuMP pathway; D-fructose 6-phosphate from D-ribulose 5-phosphate and formaldehyde: step 1/2. Catalyzes the condensation of ribulose 5-phosphate with formaldehyde to form 3-hexulose 6-phosphate. In Staphylococcus haemolyticus (strain JCSC1435), this protein is 3-hexulose-6-phosphate synthase.